A 580-amino-acid chain; its full sequence is NADH-quinone oxidoreductase subunit C/D (580 aa).

The segment at 1–171 (MSLDQAIPEA…PPFVLTDRLF (171 aa)) is NADH dehydrogenase I subunit C. An NADH dehydrogenase I subunit D region spans residues 195-580 (ELMVLNFGPH…IDFVMSDVDR (386 aa)).

In the N-terminal section; belongs to the complex I 30 kDa subunit family. It in the C-terminal section; belongs to the complex I 49 kDa subunit family. NDH-1 is composed of 13 different subunits. Subunits NuoB, CD, E, F, and G constitute the peripheral sector of the complex.

The protein resides in the cell inner membrane. It catalyses the reaction a quinone + NADH + 5 H(+)(in) = a quinol + NAD(+) + 4 H(+)(out). In terms of biological role, NDH-1 shuttles electrons from NADH, via FMN and iron-sulfur (Fe-S) centers, to quinones in the respiratory chain. The immediate electron acceptor for the enzyme in this species is believed to be ubiquinone. Couples the redox reaction to proton translocation (for every two electrons transferred, four hydrogen ions are translocated across the cytoplasmic membrane), and thus conserves the redox energy in a proton gradient. This is NADH-quinone oxidoreductase subunit C/D from Cereibacter sphaeroides (strain ATCC 17029 / ATH 2.4.9) (Rhodobacter sphaeroides).